Reading from the N-terminus, the 408-residue chain is MARDKFERSKPHVNIGTIGHVDHGKTTLTAAISATLSQYTGKSKKFDEIDSAPEERARGITINTAHVEYETDKWYYAHVDCPGHADYVKNMITGAAQMDGAILVCSAANGPMPQTREHILLAKQVGVPYIVVFLNKADMVDDEELLELVQLEVQELLEKYDFPGSEIPFVAGSALLALEAVANNPTIKRGEDKWVDTIYQLMDKVDEYIPTPERETDKAFLMAVEDVFSITGRGTVATGRIERGKVKVGDTIEIVGLRETRNTTITGLEMFQKSLDEALAGDNVGILVRGIQKTDIERGMVLAAPGSITPHTKFEGEVYVLTKEEGGRHTPFFSGYRPQFYVRTTDVTGTIAQFTSDDGSTAEMVMPGDRIKMTAQLIHPIAIEKGMRFAIREGGRTVGAGVVSKIIE.

The tr-type G domain occupies 10–213 (KPHVNIGTIG…KVDEYIPTPE (204 aa)). The G1 stretch occupies residues 19 to 26 (GHVDHGKT). Position 19-26 (19-26 (GHVDHGKT)) interacts with GTP. Thr26 is a binding site for Mg(2+). Positions 59–63 (GITIN) are G2. The G3 stretch occupies residues 80–83 (DCPG). Residues 80-84 (DCPGH) and 135-138 (NKAD) contribute to the GTP site. A G4 region spans residues 135-138 (NKAD). Residues 173–175 (SAL) form a G5 region.

This sequence belongs to the TRAFAC class translation factor GTPase superfamily. Classic translation factor GTPase family. EF-Tu/EF-1A subfamily.

Its subcellular location is the plastid. It is found in the chloroplast. The catalysed reaction is GTP + H2O = GDP + phosphate + H(+). Functionally, GTP hydrolase that promotes the GTP-dependent binding of aminoacyl-tRNA to the A-site of ribosomes during protein biosynthesis. The sequence is that of Elongation factor Tu, chloroplastic (tufA) from Guillardia theta (Cryptophyte).